A 286-amino-acid polypeptide reads, in one-letter code: Co-chaperone protein DjlA (286 aa).

Topologically, residues 1–6 are periplasmic; it reads MQFIGK. Residues 7–31 form a helical membrane-spanning segment; it reads IIGFFIGYKLFGGLFGGLLGIFIGH. Over 32–286 the chain is Cytoplasmic; sequence LADKKLYELG…DLICKTKGWK (255 aa). The J domain maps to 220 to 286; it reads DAYTVLGINE…DLICKTKGWK (67 aa).

Homodimer.

It is found in the cell inner membrane. Functionally, regulatory DnaK co-chaperone. Direct interaction between DnaK and DjlA is needed for the induction of the wcaABCDE operon, involved in the synthesis of a colanic acid polysaccharide capsule, possibly through activation of the RcsB/RcsC phosphotransfer signaling pathway. The colanic acid capsule may help the bacterium survive conditions outside the host. The chain is Co-chaperone protein DjlA from Haemophilus ducreyi (strain 35000HP / ATCC 700724).